Here is a 225-residue protein sequence, read N- to C-terminus: NAD(P)H-quinone oxidoreductase subunit K, chloroplastic (225 aa).

The [4Fe-4S] cluster site is built by Cys-43, Cys-44, Cys-108, and Cys-139.

Belongs to the complex I 20 kDa subunit family. In terms of assembly, NDH is composed of at least 16 different subunits, 5 of which are encoded in the nucleus. [4Fe-4S] cluster serves as cofactor.

The protein resides in the plastid. It localises to the chloroplast thylakoid membrane. It carries out the reaction a plastoquinone + NADH + (n+1) H(+)(in) = a plastoquinol + NAD(+) + n H(+)(out). It catalyses the reaction a plastoquinone + NADPH + (n+1) H(+)(in) = a plastoquinol + NADP(+) + n H(+)(out). NDH shuttles electrons from NAD(P)H:plastoquinone, via FMN and iron-sulfur (Fe-S) centers, to quinones in the photosynthetic chain and possibly in a chloroplast respiratory chain. The immediate electron acceptor for the enzyme in this species is believed to be plastoquinone. Couples the redox reaction to proton translocation, and thus conserves the redox energy in a proton gradient. The protein is NAD(P)H-quinone oxidoreductase subunit K, chloroplastic of Guizotia abyssinica (Niger).